Consider the following 280-residue polypeptide: Undecaprenyl-diphosphatase (280 aa).

Transmembrane regions (helical) follow at residues 1-21, 40-60, 89-109, 116-136, 146-166, 191-211, 227-247, and 260-280; these read MEWI…FLPI, GAAF…VFFW, WLVV…QNAI, LWIV…ADAV, LTVK…IPGV, FLLA…KIVA, LATV…LKFI, and IALG…ATLS.

It belongs to the UppP family.

The protein localises to the cell membrane. The enzyme catalyses di-trans,octa-cis-undecaprenyl diphosphate + H2O = di-trans,octa-cis-undecaprenyl phosphate + phosphate + H(+). Catalyzes the dephosphorylation of undecaprenyl diphosphate (UPP). Confers resistance to bacitracin. The sequence is that of Undecaprenyl-diphosphatase from Renibacterium salmoninarum (strain ATCC 33209 / DSM 20767 / JCM 11484 / NBRC 15589 / NCIMB 2235).